Here is a 222-residue protein sequence, read N- to C-terminus: MSGEDVPHRAESSEARAAAVSDIQDLMRRKEEIEAEIKANYDVLESQKGIGMNEPLVDCEGYPRADVDLYQVRTARHNIICLQNDHKALMKQVEEALHQLHARDKEKQARDMAEAREEAMNRRLASNSPVLPQAFARVNSISPGSPASIAGLQVDDEIVEFGSVNTQNFQSVQNVGTVVQHSEGKPLNVTVIRRGEKHQLRLIPTRWAGKGLLGCNIIPLQR.

A PDZ domain is found at 108–194 (QARDMAEARE…KPLNVTVIRR (87 aa)). At Ser-128 the chain carries Phosphoserine.

Belongs to the proteasome subunit p27 family. In terms of assembly, interacts with PSMC3. Part of a transient complex (modulator) containing PSMD9, PSMC6 and PSMC3 formed during the assembly of the 26S proteasome.

Its function is as follows. Acts as a chaperone during the assembly of the 26S proteasome, specifically of the base subcomplex of the PA700/19S regulatory complex (RC). During the base subcomplex assembly is part of an intermediate PSMD9:PSMC6:PSMC3 module, also known as modulator trimer complex; PSMD9 is released during the further base assembly process. This Mus musculus (Mouse) protein is 26S proteasome non-ATPase regulatory subunit 9 (Psmd9).